A 295-amino-acid polypeptide reads, in one-letter code: Ribosomal RNA small subunit methyltransferase A (295 aa).

Residues N25, L27, G52, E73, D98, and N120 each contribute to the S-adenosyl-L-methionine site.

This sequence belongs to the class I-like SAM-binding methyltransferase superfamily. rRNA adenine N(6)-methyltransferase family. RsmA subfamily.

The protein resides in the cytoplasm. The catalysed reaction is adenosine(1518)/adenosine(1519) in 16S rRNA + 4 S-adenosyl-L-methionine = N(6)-dimethyladenosine(1518)/N(6)-dimethyladenosine(1519) in 16S rRNA + 4 S-adenosyl-L-homocysteine + 4 H(+). Functionally, specifically dimethylates two adjacent adenosines (A1518 and A1519) in the loop of a conserved hairpin near the 3'-end of 16S rRNA in the 30S particle. May play a critical role in biogenesis of 30S subunits. The chain is Ribosomal RNA small subunit methyltransferase A from Desulfotalea psychrophila (strain LSv54 / DSM 12343).